Here is a 423-residue protein sequence, read N- to C-terminus: MARSNYLRIFRVLEEINRRRTIPDIYHEALEDRLVITFTQPSGPLKRSKTRRPKKEYKLQYENTKAHRVYVEILEDYPQLFIPFILATPPKSCETFKLGEFREKHDLSAVKVDLRPDIRRTLDNIANRKGFNQNRRYRRLICTLFPSGRKPATTAETQNCWAYRAAYLNAVHTIFSEQICSAMEVSPTAHSPECQAPQTTSCVEMKLPKQNYQDAIVLLELSLPIDTIKILFPSANERIICSLSPQSGRGPEPSTQIAEPGRHDSQSEQSTISQSEGYILRGASISAILSVFGPRIWGAIEKSQLRKWEKDNLSEETTDCVSIEIHPRRPHCSTCRVRIGFIDDSHFRRKTVHLSLSLSAPNPLALLILEFNIFAVETVEPSFVVFRKYIIHWMFVAVIEEARRNSKGFPKGALQCCEYIHKD.

Residues 46-69 carry the Bipartite nuclear localization signal motif; sequence KRSKTRRPKKEYKLQYENTKAHRV. The tract at residues 157 to 187 is RNA recognition motif (RRM)-like domain; that stretch reads TQNCWAYRAAYLNAVHTIFSEQICSAMEVSP. The segment covering 243-257 has biased composition (polar residues); that stretch reads LSPQSGRGPEPSTQI. Positions 243 to 273 are disordered; sequence LSPQSGRGPEPSTQIAEPGRHDSQSEQSTIS.

It belongs to the hrmA family.

It localises to the nucleus. Functionally, probably modulates the generation of the hypoxia-typic morphotype (called H-MORPH) with altered biofilm architecture that leads to increased host inflammation, rapid disease progression, and mortality in a murine model of invasive aspergillosis. The protein is Hypoxia responsive morphology factor B of Aspergillus fumigatus (strain CBS 144.89 / FGSC A1163 / CEA10) (Neosartorya fumigata).